We begin with the raw amino-acid sequence, 62 residues long: Large ribosomal subunit protein bL32 (62 aa).

The segment covering 1–16 (MAVPKRKTSPMKRGFR) has biased composition (basic residues). Residues 1-62 (MAVPKRKTSP…QILTPKNKEA (62 aa)) form a disordered region. Residues 28–44 (VEDKDSGELRRPHHVDL) are compositionally biased toward basic and acidic residues.

Belongs to the bacterial ribosomal protein bL32 family.

In Methylocella silvestris (strain DSM 15510 / CIP 108128 / LMG 27833 / NCIMB 13906 / BL2), this protein is Large ribosomal subunit protein bL32.